A 459-amino-acid chain; its full sequence is Pentatricopeptide repeat-containing protein At5g18390, mitochondrial (459 aa).

The N-terminal 7 residues, 1–7 (MLLLRRY), are a transit peptide targeting the mitochondrion. 9 PPR repeats span residues 110 to 144 (TSME…SLDI), 145 to 175 (SGET…VPKT), 181 to 215 (TVDV…GLKP), 216 to 250 (DKRT…GFNP), 251 to 285 (PARG…GFVP), 286 to 320 (DIQT…GLCV), 321 to 355 (DIDT…GHKP), 356 to 390 (FPSL…AHPP), and 391 to 425 (NRPV…GLVP).

It belongs to the PPR family. P subfamily.

It localises to the mitochondrion. This Arabidopsis thaliana (Mouse-ear cress) protein is Pentatricopeptide repeat-containing protein At5g18390, mitochondrial.